Reading from the N-terminus, the 38-residue chain is Potassium channel toxin alpha-KTx 2.13 (38 aa).

3 disulfides stabilise this stretch: cysteine 7–cysteine 29, cysteine 13–cysteine 34, and cysteine 17–cysteine 36.

It belongs to the short scorpion toxin superfamily. Potassium channel inhibitor family. Alpha-KTx 02 subfamily. In terms of tissue distribution, expressed by the venom gland.

The protein localises to the secreted. Functionally, selective inhibitor of voltage-gated potassium channels, blocks the Kv1.2/KCNA2 (Kd=1.3 nM) and Kv1.3/KCNA3 (Kd=7.2 nM) channels. Association and dissociation rates of the toxin are slower for Kv1.2/KCNA2 than for Kv1.3/KCNA3. This is Potassium channel toxin alpha-KTx 2.13 from Centruroides suffusus (Durango bark scorpion).